Here is a 473-residue protein sequence, read N- to C-terminus: Thermostable beta-glucosidase B (473 aa).

Catalysis depends on E196, which acts as the Proton donor. E378 serves as the catalytic Nucleophile.

The protein belongs to the glycosyl hydrolase 1 family.

It is found in the cytoplasm. It carries out the reaction Hydrolysis of terminal, non-reducing beta-D-glucosyl residues with release of beta-D-glucose.. This Thermobispora bispora (Microbispora bispora) protein is Thermostable beta-glucosidase B (bglB).